We begin with the raw amino-acid sequence, 308 residues long: ADP-L-glycero-D-manno-heptose-6-epimerase (308 aa).

Residues 10-11, 31-32, Lys-38, Lys-53, 75-79, and Asn-92 contribute to the NADP(+) site; these read MI, DN, and EGACS. Tyr-140 functions as the Proton acceptor in the catalytic mechanism. Lys-144 is a binding site for NADP(+). Asn-169 serves as a coordination point for substrate. 2 residues coordinate NADP(+): Val-170 and Lys-178. The active-site Proton acceptor is Lys-178. Residues Ser-180, His-187, 201–204, Arg-209, and Tyr-272 contribute to the substrate site; that span reads FEGS.

It belongs to the NAD(P)-dependent epimerase/dehydratase family. HldD subfamily. Homopentamer. The cofactor is NADP(+).

The enzyme catalyses ADP-D-glycero-beta-D-manno-heptose = ADP-L-glycero-beta-D-manno-heptose. The protein operates within nucleotide-sugar biosynthesis; ADP-L-glycero-beta-D-manno-heptose biosynthesis; ADP-L-glycero-beta-D-manno-heptose from D-glycero-beta-D-manno-heptose 7-phosphate: step 4/4. Catalyzes the interconversion between ADP-D-glycero-beta-D-manno-heptose and ADP-L-glycero-beta-D-manno-heptose via an epimerization at carbon 6 of the heptose. This is ADP-L-glycero-D-manno-heptose-6-epimerase from Actinobacillus pleuropneumoniae serotype 7 (strain AP76).